We begin with the raw amino-acid sequence, 660 residues long: tRNA 5-methylaminomethyl-2-thiouridine biosynthesis bifunctional protein MnmC (660 aa).

The tRNA (mnm(5)s(2)U34)-methyltransferase stretch occupies residues 1–242; sequence MTDRIVPATL…KRAMLVGEFA (242 aa). The segment at 266 to 660 is FAD-dependent cmnm(5)s(2)U34 oxidoreductase; sequence IGAGLAGCAV…VRALRHGRVA (395 aa).

It in the N-terminal section; belongs to the methyltransferase superfamily. tRNA (mnm(5)s(2)U34)-methyltransferase family. This sequence in the C-terminal section; belongs to the DAO family. It depends on FAD as a cofactor.

Its subcellular location is the cytoplasm. It carries out the reaction 5-aminomethyl-2-thiouridine(34) in tRNA + S-adenosyl-L-methionine = 5-methylaminomethyl-2-thiouridine(34) in tRNA + S-adenosyl-L-homocysteine + H(+). Catalyzes the last two steps in the biosynthesis of 5-methylaminomethyl-2-thiouridine (mnm(5)s(2)U) at the wobble position (U34) in tRNA. Catalyzes the FAD-dependent demodification of cmnm(5)s(2)U34 to nm(5)s(2)U34, followed by the transfer of a methyl group from S-adenosyl-L-methionine to nm(5)s(2)U34, to form mnm(5)s(2)U34. This Burkholderia pseudomallei (strain 1106a) protein is tRNA 5-methylaminomethyl-2-thiouridine biosynthesis bifunctional protein MnmC.